A 99-amino-acid polypeptide reads, in one-letter code: Aspartyl/glutamyl-tRNA(Asn/Gln) amidotransferase subunit C (99 aa).

This sequence belongs to the GatC family. As to quaternary structure, heterotrimer of A, B and C subunits.

The enzyme catalyses L-glutamyl-tRNA(Gln) + L-glutamine + ATP + H2O = L-glutaminyl-tRNA(Gln) + L-glutamate + ADP + phosphate + H(+). The catalysed reaction is L-aspartyl-tRNA(Asn) + L-glutamine + ATP + H2O = L-asparaginyl-tRNA(Asn) + L-glutamate + ADP + phosphate + 2 H(+). Allows the formation of correctly charged Asn-tRNA(Asn) or Gln-tRNA(Gln) through the transamidation of misacylated Asp-tRNA(Asn) or Glu-tRNA(Gln) in organisms which lack either or both of asparaginyl-tRNA or glutaminyl-tRNA synthetases. The reaction takes place in the presence of glutamine and ATP through an activated phospho-Asp-tRNA(Asn) or phospho-Glu-tRNA(Gln). In Rhodococcus erythropolis (strain PR4 / NBRC 100887), this protein is Aspartyl/glutamyl-tRNA(Asn/Gln) amidotransferase subunit C.